We begin with the raw amino-acid sequence, 652 residues long: Carboxypeptidase S1 homolog A (652 aa).

The N-terminal stretch at 1–19 (MRLAASIAVALPVIGAASA) is a signal peptide. An intrachain disulfide couples Cys50 to Cys121. N-linked (GlcNAc...) asparagine glycosylation is found at Asn77, Asn132, Asn161, Asn168, Asn184, and Asn202. Ser238 is an active-site residue. N-linked (GlcNAc...) asparagine glycosylation is found at Asn260, Asn299, Asn347, and Asn410. 2 cysteine pairs are disulfide-bonded: Cys325–Cys361 and Cys332–Cys354. The active site involves Asp458. A substrate-binding site is contributed by Cys461. Asn474, Asn492, and Asn505 each carry an N-linked (GlcNAc...) asparagine glycan. His516 is an active-site residue. Glu517 lines the substrate pocket. N-linked (GlcNAc...) asparagine glycosylation is present at Asn594. The tract at residues 608-628 (AASKGNPPPTTTSSPTASPTA) is disordered. Residues 618–628 (TTSSPTASPTA) show a composition bias toward low complexity. Residue Gly629 is the site of GPI-anchor amidated glycine attachment. The propeptide at 630–652 (SAMLKAPVAMLAISALTVLAFYL) is removed in mature form.

The protein belongs to the peptidase S10 family.

It is found in the cell membrane. It catalyses the reaction Preferential release of a C-terminal arginine or lysine residue.. Functionally, extracellular serine carboxypeptidase that contributes to pathogenicity. The sequence is that of Carboxypeptidase S1 homolog A (SCPA) from Trichophyton verrucosum (strain HKI 0517).